The sequence spans 210 residues: Large ribosomal subunit protein uL3 (210 aa).

The interval 131–154 (GPMSHGSKYHRRVGSMGATTDPGR) is disordered.

It belongs to the universal ribosomal protein uL3 family. Part of the 50S ribosomal subunit. Forms a cluster with proteins L14 and L19.

One of the primary rRNA binding proteins, it binds directly near the 3'-end of the 23S rRNA, where it nucleates assembly of the 50S subunit. The protein is Large ribosomal subunit protein uL3 of Thermoanaerobacter pseudethanolicus (strain ATCC 33223 / 39E) (Clostridium thermohydrosulfuricum).